Reading from the N-terminus, the 381-residue chain is Transaldolase 2 (381 aa).

The active-site Schiff-base intermediate with substrate is Lys-141.

It belongs to the transaldolase family. Type 2 subfamily.

The protein localises to the cytoplasm. It catalyses the reaction D-sedoheptulose 7-phosphate + D-glyceraldehyde 3-phosphate = D-erythrose 4-phosphate + beta-D-fructose 6-phosphate. It participates in carbohydrate degradation; pentose phosphate pathway; D-glyceraldehyde 3-phosphate and beta-D-fructose 6-phosphate from D-ribose 5-phosphate and D-xylulose 5-phosphate (non-oxidative stage): step 2/3. Functionally, transaldolase is important for the balance of metabolites in the pentose-phosphate pathway. The sequence is that of Transaldolase 2 (tal2) from Nostoc punctiforme (strain ATCC 29133 / PCC 73102).